The primary structure comprises 437 residues: Aspartate--tRNA(Asp/Asn) ligase (437 aa).

An L-aspartate-binding site is contributed by glutamate 175. Positions 197–200 are aspartate; it reads QLYK. Arginine 219 serves as a coordination point for L-aspartate. ATP is bound by residues 219–221, 227–229, and glutamate 360; these read RAE and RHL. Mg(2+)-binding residues include glutamate 360 and serine 363. The L-aspartate site is built by serine 363 and arginine 367. Residue 408 to 411 coordinates ATP; sequence GAER.

The protein belongs to the class-II aminoacyl-tRNA synthetase family. Type 2 subfamily. In terms of assembly, homodimer. Mg(2+) serves as cofactor.

The protein localises to the cytoplasm. It catalyses the reaction tRNA(Asx) + L-aspartate + ATP = L-aspartyl-tRNA(Asx) + AMP + diphosphate. Its function is as follows. Aspartyl-tRNA synthetase with relaxed tRNA specificity since it is able to aspartylate not only its cognate tRNA(Asp) but also tRNA(Asn). Reaction proceeds in two steps: L-aspartate is first activated by ATP to form Asp-AMP and then transferred to the acceptor end of tRNA(Asp/Asn). In Methanothermobacter thermautotrophicus (strain ATCC 29096 / DSM 1053 / JCM 10044 / NBRC 100330 / Delta H) (Methanobacterium thermoautotrophicum), this protein is Aspartate--tRNA(Asp/Asn) ligase.